Here is a 267-residue protein sequence, read N- to C-terminus: Tryptophan synthase alpha chain (267 aa).

Active-site proton acceptor residues include Glu-49 and Asp-60.

Belongs to the TrpA family. Tetramer of two alpha and two beta chains.

It catalyses the reaction (1S,2R)-1-C-(indol-3-yl)glycerol 3-phosphate + L-serine = D-glyceraldehyde 3-phosphate + L-tryptophan + H2O. The protein operates within amino-acid biosynthesis; L-tryptophan biosynthesis; L-tryptophan from chorismate: step 5/5. Its function is as follows. The alpha subunit is responsible for the aldol cleavage of indoleglycerol phosphate to indole and glyceraldehyde 3-phosphate. This is Tryptophan synthase alpha chain from Acinetobacter baylyi (strain ATCC 33305 / BD413 / ADP1).